We begin with the raw amino-acid sequence, 637 residues long: Probable potassium transport system protein Kup 2 (637 aa).

Residues 1-21 (MDLASRDSEAETVEQSSHSGA) form a disordered region. 12 consecutive transmembrane segments (helical) span residues 29–49 (LMLG…IYAF), 68–88 (VLSL…VAFV), 116–136 (LILA…IITP), 150–170 (VTPT…AILF), 180–200 (VAAV…VAGL), 228–248 (AAFV…ALYV), 258–278 (IVLA…FGQG), 300–320 (ALMP…QAVI), 359–379 (LLVA…SSLA), 381–401 (AYGI…FVVM), 409–429 (LAVA…FFLA), and 434–454 (IFEG…IMWT).

This sequence belongs to the HAK/KUP transporter (TC 2.A.72) family.

The protein resides in the cell inner membrane. It catalyses the reaction K(+)(in) + H(+)(in) = K(+)(out) + H(+)(out). Transport of potassium into the cell. Likely operates as a K(+):H(+) symporter. This Mesorhizobium japonicum (strain LMG 29417 / CECT 9101 / MAFF 303099) (Mesorhizobium loti (strain MAFF 303099)) protein is Probable potassium transport system protein Kup 2.